We begin with the raw amino-acid sequence, 231 residues long: A-type ATP synthase subunit D (231 aa).

It belongs to the V-ATPase D subunit family. Has multiple subunits with at least A(3), B(3), C, D, E, F, H, I and proteolipid K(x).

It is found in the cell membrane. Component of the A-type ATP synthase that produces ATP from ADP in the presence of a proton gradient across the membrane. The protein is A-type ATP synthase subunit D of Methanobrevibacter smithii (strain ATCC 35061 / DSM 861 / OCM 144 / PS).